We begin with the raw amino-acid sequence, 178 residues long: Peptide deformylase 2 (178 aa).

Fe cation-binding residues include Cys101 and His143. Glu144 is a catalytic residue. His147 contributes to the Fe cation binding site.

Belongs to the polypeptide deformylase family. Fe(2+) serves as cofactor.

The enzyme catalyses N-terminal N-formyl-L-methionyl-[peptide] + H2O = N-terminal L-methionyl-[peptide] + formate. Functionally, removes the formyl group from the N-terminal Met of newly synthesized proteins. Requires at least a dipeptide for an efficient rate of reaction. N-terminal L-methionine is a prerequisite for activity but the enzyme has broad specificity at other positions. In Pseudomonas putida (strain ATCC 47054 / DSM 6125 / CFBP 8728 / NCIMB 11950 / KT2440), this protein is Peptide deformylase 2.